Consider the following 503-residue polypeptide: Probable cytosol aminopeptidase (503 aa).

The Mn(2+) site is built by Lys-270 and Asp-275. Lys-282 is an active-site residue. Positions 293, 352, and 354 each coordinate Mn(2+). Arg-356 is an active-site residue.

Belongs to the peptidase M17 family. Mn(2+) is required as a cofactor.

It is found in the cytoplasm. The enzyme catalyses Release of an N-terminal amino acid, Xaa-|-Yaa-, in which Xaa is preferably Leu, but may be other amino acids including Pro although not Arg or Lys, and Yaa may be Pro. Amino acid amides and methyl esters are also readily hydrolyzed, but rates on arylamides are exceedingly low.. It catalyses the reaction Release of an N-terminal amino acid, preferentially leucine, but not glutamic or aspartic acids.. Its function is as follows. Presumably involved in the processing and regular turnover of intracellular proteins. Catalyzes the removal of unsubstituted N-terminal amino acids from various peptides. This chain is Probable cytosol aminopeptidase, found in Yersinia enterocolitica serotype O:8 / biotype 1B (strain NCTC 13174 / 8081).